The following is a 158-amino-acid chain: NADH-quinone oxidoreductase subunit B 2 (158 aa).

Positions 37, 38, 102, and 132 each coordinate [4Fe-4S] cluster.

It belongs to the complex I 20 kDa subunit family. As to quaternary structure, NDH-1 is composed of 14 different subunits. Subunits NuoB, C, D, E, F, and G constitute the peripheral sector of the complex. It depends on [4Fe-4S] cluster as a cofactor.

Its subcellular location is the cell inner membrane. It catalyses the reaction a quinone + NADH + 5 H(+)(in) = a quinol + NAD(+) + 4 H(+)(out). NDH-1 shuttles electrons from NADH, via FMN and iron-sulfur (Fe-S) centers, to quinones in the respiratory chain. Couples the redox reaction to proton translocation (for every two electrons transferred, four hydrogen ions are translocated across the cytoplasmic membrane), and thus conserves the redox energy in a proton gradient. The polypeptide is NADH-quinone oxidoreductase subunit B 2 (Acidithiobacillus ferrooxidans (strain ATCC 53993 / BNL-5-31) (Leptospirillum ferrooxidans (ATCC 53993))).